Here is a 103-residue protein sequence, read N- to C-terminus: MHVKKGDKVQVISGKDKGKQGVILAAFPKKNRVIVEGVNIVKKHAKPSQANPQGGIITKEAPIHVSKVMPLDPKTGLPTRIGYKIVDGKKVRYAKRSGEILDK.

It belongs to the universal ribosomal protein uL24 family. Part of the 50S ribosomal subunit.

In terms of biological role, one of two assembly initiator proteins, it binds directly to the 5'-end of the 23S rRNA, where it nucleates assembly of the 50S subunit. One of the proteins that surrounds the polypeptide exit tunnel on the outside of the subunit. This chain is Large ribosomal subunit protein uL24, found in Geobacillus sp. (strain WCH70).